A 67-amino-acid polypeptide reads, in one-letter code: Bowman-Birk type proteinase inhibitor A4 (67 aa).

4 cysteine pairs are disulfide-bonded: cysteine 10–cysteine 29, cysteine 16–cysteine 27, cysteine 36–cysteine 43, and cysteine 40–cysteine 57.

This sequence belongs to the Bowman-Birk serine protease inhibitor family. Expressed in bulb (at protein level).

Serine protease inhibitor. Inhibits trypsin (Ki=12nM) and weakly inhibits chymotrypsin with (Ki=460nm). Does not inhibit bacterial subtilisin. The chain is Bowman-Birk type proteinase inhibitor A4 from Hyacinthus orientalis (Common hyacinth).